Here is an 89-residue protein sequence, read N- to C-terminus: Small ribosomal subunit protein uS15 (89 aa).

This sequence belongs to the universal ribosomal protein uS15 family. Part of the 30S ribosomal subunit. Forms a bridge to the 50S subunit in the 70S ribosome, contacting the 23S rRNA.

Its function is as follows. One of the primary rRNA binding proteins, it binds directly to 16S rRNA where it helps nucleate assembly of the platform of the 30S subunit by binding and bridging several RNA helices of the 16S rRNA. Forms an intersubunit bridge (bridge B4) with the 23S rRNA of the 50S subunit in the ribosome. This chain is Small ribosomal subunit protein uS15, found in Lacticaseibacillus casei (strain BL23) (Lactobacillus casei).